We begin with the raw amino-acid sequence, 354 residues long: Sulfate permease CysP (354 aa).

8 helical membrane-spanning segments follow: residues 3-23 (LAAI…GAAA), 40-60 (ALIL…GEVV), 77-97 (IVCI…LLGI), 125-145 (LIIV…TYFV), 164-184 (ILGI…GMNN), 197-217 (VLDV…GALL), 293-313 (VWIV…SLFL), and 320-340 (IFIM…TKAI).

The protein belongs to the inorganic phosphate transporter (PiT) (TC 2.A.20) family.

The protein localises to the cell membrane. Functionally, involved in the import of sulfate. This Bacillus subtilis (strain 168) protein is Sulfate permease CysP (cysP).